The chain runs to 303 residues: Movement protein (303 aa).

The protein belongs to the tobamovirus movement protein family.

Its subcellular location is the host cytoplasm. It is found in the host cytoskeleton. The protein resides in the host cell junction. The protein localises to the host plasmodesma. Transports viral genome to neighboring plant cells directly through plasmosdesmata, without any budding. The movement protein allows efficient cell to cell propagation, by bypassing the host cell wall barrier. Forms a ribonucleoprotein complex with viral RNA. Binds microtubules and modulates microtubule stability. Can bind double-stranded DNA. This is Movement protein (MP) from Cymbidium (ORSV).